Here is a 141-residue protein sequence, read N- to C-terminus: Hemoglobin subunit alpha-D (141 aa).

Positions 1 to 141 (VLTGEDKKHV…VAAVLAEKYR (141 aa)) constitute a Globin domain. Heme b contacts are provided by histidine 58 and histidine 87.

This sequence belongs to the globin family. In terms of assembly, heterotetramer of two alpha-D chains and two beta chains. In terms of tissue distribution, red blood cells.

Functionally, involved in oxygen transport from the lung to the various peripheral tissues. The sequence is that of Hemoglobin subunit alpha-D (HBAD) from Turdus merula (Common blackbird).